Reading from the N-terminus, the 107-residue chain is Putative double-stranded DNA mimic protein YpsIP31758_1954 (107 aa).

This sequence belongs to the putative dsDNA mimic protein family.

In terms of biological role, may act as a double-stranded DNA (dsDNA) mimic. Probably regulates the activity of a dsDNA-binding protein. The protein is Putative double-stranded DNA mimic protein YpsIP31758_1954 of Yersinia pseudotuberculosis serotype O:1b (strain IP 31758).